Reading from the N-terminus, the 179-residue chain is Replication restart protein DnaT (179 aa).

A disordered region spans residues 156–179 (GGLPKRDVNTVSEPDSQIPPGFRG).

Belongs to the DnaT family. Homooligomerizes. Interacts with PriB. Component of the replication restart primosome. Primosome assembly occurs via a 'hand-off' mechanism. PriA binds to replication forks, subsequently PriB then DnaT bind; DnaT then displaces ssDNA to generate the helicase loading substrate.

Involved in the restart of stalled replication forks, which reloads the replicative helicase on sites other than the origin of replication. Can function in multiple replication restart pathways. Displaces ssDNA from a PriB-ssDNA complex. Probably forms a spiral filament on ssDNA. The sequence is that of Replication restart protein DnaT from Shigella boydii serotype 18 (strain CDC 3083-94 / BS512).